The following is a 250-amino-acid chain: uncharacterized protein (250 aa).

This sequence to Synechocystis PCC 6803 sll0249.

This is an uncharacterized protein from Nostoc sp. (strain PCC 7120 / SAG 25.82 / UTEX 2576).